Consider the following 167-residue polypeptide: D-aminoacyl-tRNA deacylase 2 (167 aa).

Positions 159–160 (GP) match the Gly-transPro motif, allows the protein to recognize chirality of D-amino acids motif.

It belongs to the DTD family. As to quaternary structure, homodimer.

The protein resides in the cytoplasm. The enzyme catalyses a D-aminoacyl-tRNA + H2O = a tRNA + a D-alpha-amino acid + H(+). It catalyses the reaction glycyl-tRNA(Ala) + H2O = tRNA(Ala) + glycine + H(+). It carries out the reaction D-tyrosyl-tRNA(Tyr) + H2O = D-tyrosine + tRNA(Tyr). The catalysed reaction is L-alanyl-tRNA(Thr) + H2O = tRNA(Thr) + L-alanine + H(+). Functionally, deacylates mischarged D-aminoacyl-tRNAs. Also deacylates mischarged glycyl-tRNA(Ala), protecting cells against glycine mischarging by AlaRS. Probably acts by rejecting L-amino acids from its binding site rather than specific recognition of D-amino acids. Catalyzes the hydrolysis of D-tyrosyl-tRNA(Tyr), has no activity on correctly charged L-tyrosyl-tRNA(Tyr). By recycling D-aminoacyl-tRNA to D-amino acids and free tRNA molecules, this enzyme counteracts the toxicity associated with the formation of D-aminoacyl-tRNA entities in vivo and helps enforce protein L-homochirality. In contrast to DTD1, deacylates L-Ala mischarged on tRNA(Thr)(G4.U69) by alanine-tRNA ligase AARS. Can deacylate L-Ala due to a relaxed specificity for substrate chirality caused by the trans conformation of the Gly-Pro motif in the active site. Also hydrolyzes correctly charged, achiral, glycyl-tRNA(Gly) in vitro, although in vivo EEF1A1/EF-Tu may protect cognate achiral glycyl-tRNA(Gly) from DTD2-mediated deacetylation. The polypeptide is D-aminoacyl-tRNA deacylase 2 (DTD2) (Gallus gallus (Chicken)).